The chain runs to 367 residues: 3-isopropylmalate dehydrogenase (367 aa).

NAD(+) is bound at residue glycine 75–glutamate 88. Residues arginine 95, arginine 105, arginine 133, and aspartate 230 each contribute to the substrate site. The Mg(2+) site is built by aspartate 230, aspartate 254, and aspartate 258. Residue glycine 288 to asparagine 300 coordinates NAD(+).

Belongs to the isocitrate and isopropylmalate dehydrogenases family. LeuB type 1 subfamily. Homodimer. Requires Mg(2+) as cofactor. Mn(2+) is required as a cofactor.

It is found in the cytoplasm. The enzyme catalyses (2R,3S)-3-isopropylmalate + NAD(+) = 4-methyl-2-oxopentanoate + CO2 + NADH. The protein operates within amino-acid biosynthesis; L-leucine biosynthesis; L-leucine from 3-methyl-2-oxobutanoate: step 3/4. In terms of biological role, catalyzes the oxidation of 3-carboxy-2-hydroxy-4-methylpentanoate (3-isopropylmalate) to 3-carboxy-4-methyl-2-oxopentanoate. The product decarboxylates to 4-methyl-2 oxopentanoate. The protein is 3-isopropylmalate dehydrogenase of Psychrobacter cryohalolentis (strain ATCC BAA-1226 / DSM 17306 / VKM B-2378 / K5).